The chain runs to 248 residues: Ureidoacrylate amidohydrolase RutB (248 aa).

Aspartate 41 acts as the Proton acceptor in catalysis. Residue lysine 150 is part of the active site. The Nucleophile role is filled by cysteine 183.

It belongs to the isochorismatase family. RutB subfamily.

It catalyses the reaction (Z)-3-ureidoacrylate + H2O + H(+) = (Z)-3-aminoacrylate + NH4(+) + CO2. The enzyme catalyses (Z)-3-ureidoacrylate + H2O = (Z)-3-aminoacrylate + carbamate + H(+). It carries out the reaction (Z)-2-methylureidoacrylate + H2O + H(+) = (Z)-2-methylaminoacrylate + NH4(+) + CO2. In terms of biological role, hydrolyzes ureidoacrylate to form aminoacrylate and carbamate. The carbamate hydrolyzes spontaneously, thereby releasing one of the nitrogen atoms of the pyrimidine ring as ammonia and one of its carbon atoms as CO2. The chain is Ureidoacrylate amidohydrolase RutB from Stutzerimonas stutzeri (strain A1501) (Pseudomonas stutzeri).